A 168-amino-acid polypeptide reads, in one-letter code: ATP synthase F(1) complex subunit delta, mitochondrial (168 aa).

Residues 1–22 (MLPASLLRHPGLRRLMLQARTY) constitute a mitochondrion transit peptide. N6-acetyllysine; alternate occurs at positions 136 and 165. An N6-succinyllysine; alternate mark is found at Lys-136 and Lys-165.

It belongs to the ATPase epsilon chain family. Component of the ATP synthase complex composed at least of ATP5F1A/subunit alpha, ATP5F1B/subunit beta, ATP5MC1/subunit c (homooctomer), MT-ATP6/subunit a, MT-ATP8/subunit 8, ATP5ME/subunit e, ATP5MF/subunit f, ATP5MG/subunit g, ATP5MK/subunit k, ATP5MJ/subunit j, ATP5F1C/subunit gamma, ATP5F1D/subunit delta, ATP5F1E/subunit epsilon, ATP5PF/subunit F6, ATP5PB/subunit b, ATP5PD/subunit d, ATP5PO/subunit OSCP. ATP synthase complex consists of a soluble F(1) head domain (subunits alpha(3) and beta(3)) - the catalytic core - and a membrane F(0) domain - the membrane proton channel (subunits c, a, 8, e, f, g, k and j). These two domains are linked by a central stalk (subunits gamma, delta, and epsilon) rotating inside the F1 region and a stationary peripheral stalk (subunits F6, b, d, and OSCP). Component of a complex composed at least by ATPIF1, ATP5F1A, ATP5F1B, ATP5F1C AND ATP5F1E.

It is found in the mitochondrion. The protein localises to the mitochondrion inner membrane. Subunit delta, of the mitochondrial membrane ATP synthase complex (F(1)F(0) ATP synthase or Complex V) that produces ATP from ADP in the presence of a proton gradient across the membrane which is generated by electron transport complexes of the respiratory chain. ATP synthase complex consist of a soluble F(1) head domain - the catalytic core - and a membrane F(1) domain - the membrane proton channel. These two domains are linked by a central stalk rotating inside the F(1) region and a stationary peripheral stalk. During catalysis, ATP synthesis in the catalytic domain of F(1) is coupled via a rotary mechanism of the central stalk subunits to proton translocation. In vivo, can only synthesize ATP although its ATP hydrolase activity can be activated artificially in vitro. With the central stalk subunit gamma, is essential for the biogenesis of F(1) catalytic part of the ATP synthase complex namely in the formation of F1 assembly intermediate. This is ATP synthase F(1) complex subunit delta, mitochondrial from Mus musculus (Mouse).